Consider the following 316-residue polypeptide: Secondary metabolism regulator laeA (316 aa).

It belongs to the methyltransferase superfamily. LaeA methyltransferase family. Component of the heterotrimeric velvet complex composed of laeA, ve1 and velB; Ve1 acting as a bridging protein between laeA and velB. Interacts directly with veA.

It localises to the nucleus. It is found in the cytoplasm. The enzyme catalyses L-methionyl-[protein] + S-adenosyl-L-methionine = S-methyl-L-methionyl-[protein] + S-adenosyl-L-homocysteine. Methyltransferase that performs automethylation. No other methyl-accepting substrate has been identified yet. Component of the velvet transcription factor complex that acts as a global regulator for secondary metabolite gene expression. Controls the expression of the mycotoxins trichothecenes and zearalenon gene clusters. Negatively controls perithecial induction, but positively controls virulence toward the host plant. This Gibberella zeae (strain ATCC MYA-4620 / CBS 123657 / FGSC 9075 / NRRL 31084 / PH-1) (Wheat head blight fungus) protein is Secondary metabolism regulator laeA.